A 119-amino-acid polypeptide reads, in one-letter code: Large ribosomal subunit protein uL18 (119 aa).

The protein belongs to the universal ribosomal protein uL18 family. As to quaternary structure, part of the 50S ribosomal subunit; part of the 5S rRNA/L5/L18/L25 subcomplex. Contacts the 5S and 23S rRNAs.

This is one of the proteins that bind and probably mediate the attachment of the 5S RNA into the large ribosomal subunit, where it forms part of the central protuberance. The polypeptide is Large ribosomal subunit protein uL18 (Chlorobium luteolum (strain DSM 273 / BCRC 81028 / 2530) (Pelodictyon luteolum)).